The chain runs to 156 residues: Ribosome maturation factor RimP (156 aa).

It belongs to the RimP family.

The protein resides in the cytoplasm. Required for maturation of 30S ribosomal subunits. This is Ribosome maturation factor RimP from Exiguobacterium sp. (strain ATCC BAA-1283 / AT1b).